A 142-amino-acid polypeptide reads, in one-letter code: Hemoglobin subunit alpha (142 aa).

The Globin domain occupies 2–142 (VLSPTDKSNV…VSTVLTSKYR (141 aa)). A Phosphoserine modification is found at serine 4. Lysine 8 and lysine 12 each carry N6-succinyllysine. Lysine 17 carries the post-translational modification N6-acetyllysine; alternate. Lysine 17 is modified (N6-succinyllysine; alternate). Phosphotyrosine is present on tyrosine 25. Position 41 is an N6-succinyllysine (lysine 41). Residue histidine 59 coordinates O2. Position 88 (histidine 88) interacts with heme b. Residue serine 103 is modified to Phosphoserine. At threonine 109 the chain carries Phosphothreonine. Residues serine 125 and serine 132 each carry the phosphoserine modification. 2 positions are modified to phosphothreonine: threonine 135 and threonine 138. At serine 139 the chain carries Phosphoserine.

The protein belongs to the globin family. In terms of assembly, heterotetramer of two alpha chains and two beta chains. Red blood cells.

Involved in oxygen transport from the lung to the various peripheral tissues. In terms of biological role, hemopressin acts as an antagonist peptide of the cannabinoid receptor CNR1. Hemopressin-binding efficiently blocks cannabinoid receptor CNR1 and subsequent signaling. This chain is Hemoglobin subunit alpha (HBA), found in Balaenoptera acutorostrata (Common minke whale).